We begin with the raw amino-acid sequence, 1067 residues long: Protein bric-a-brac 2 (1067 aa).

Positions 30 to 121 (MAPPEEPKMV…PPRPLTSSEV (92 aa)) are disordered. Composition is skewed to basic and acidic residues over residues 47-62 (HLED…REVE) and 86-98 (KSPE…ELVK). Tyr-55 bears the Phosphotyrosine mark. 3 positions are modified to phosphoserine: Ser-56, Ser-87, and Ser-147. A BTB domain is found at 223–288 (VDVTLSCEGH…MYKGEINVCQ (66 aa)). 3 disordered regions span residues 312-412 (GRGE…QSQP), 444-505 (ANQR…AAQH), and 525-563 (GAAG…SHHD). Over residues 326-335 (FDDEDEEEEL) the composition is skewed to acidic residues. A Phosphoserine modification is found at Ser-377. Position 384 is a phosphothreonine (Thr-384). Residues 391 to 412 (GGESEISERGSSGTPGQSQSQP) are compositionally biased toward low complexity. Composition is skewed to gly residues over residues 525 to 538 (GAAG…GSGS) and 545 to 556 (GGTGVAGSGAGA). One can recognise an HTH psq-type domain in the interval 635–687 (FRERGPLKSWRPEAMAEAIFSVLKEGLSLSQAARKFDIPYPTFVLYANRVHNM). Positions 645–690 (RPEAMAEAIFSVLKEGLSLSQAARKFDIPYPTFVLYANRVHNMLGP) form a DNA-binding region, H-T-H motif. Residues 697-708 (DPRPKARGRPQR) constitute a DNA-binding region (a.T hook). Disordered stretches follow at residues 796-829 (QILS…PHAQ), 860-879 (AKHQ…PDLS), and 891-967 (VMPS…PYSA). A compositionally biased stretch (low complexity) spans 812–829 (AHHQQQPSHHQQQSPHAQ). Positions 904–914 (AAPNSAASYAR) are enriched in low complexity. Basic and acidic residues predominate over residues 915–933 (ELSRERERDRERERERELS). A compositionally biased stretch (low complexity) spans 934–949 (RQYGSQSRGSSSGSGS).

As to expression, leg imaginal disk at the central region of the tarsus and in eye antenna disk at the basal cylinder.

The protein resides in the nucleus. Functionally, probably acts as a transcriptional regulator. Required for the specification of the tarsal segment. Also involved in antenna development. In Drosophila melanogaster (Fruit fly), this protein is Protein bric-a-brac 2 (bab2).